We begin with the raw amino-acid sequence, 565 residues long: uncharacterized protein (565 aa).

The signal sequence occupies residues 1-21 (MKIPSQQVLLALPLLASPAQS). 2 N-linked (GlcNAc...) asparagine glycosylation sites follow: N46 and N88. Positions 118–302 (QGIVPYYSVS…TSVTYKTHPK (185 aa)) constitute an FAD-binding PCMH-type domain. Position 155 is a pros-8alpha-FAD histidine (H155). Residues N191, N314, N364, N371, and N484 are each glycosylated (N-linked (GlcNAc...) asparagine).

It belongs to the oxygen-dependent FAD-linked oxidoreductase family. FAD serves as cofactor.

The protein resides in the secreted. This is an uncharacterized protein from Arthroderma benhamiae (strain ATCC MYA-4681 / CBS 112371) (Trichophyton mentagrophytes).